Here is a 215-residue protein sequence, read N- to C-terminus: Glutathione S-transferase-like protein (215 aa).

The GST N-terminal domain occupies 1-76 (MPNARILKIQ…YVAASGPAAP (76 aa)). Residues 82–215 (NVAEQAAVRQ…LVAVRKEASV (134 aa)) enclose the GST C-terminal domain.

Belongs to the GST superfamily.

This Aspergillus aculeatus (strain ATCC 16872 / CBS 172.66 / WB 5094) protein is Glutathione S-transferase-like protein.